A 156-amino-acid polypeptide reads, in one-letter code: Small ribosomal subunit protein uS7 (156 aa).

This sequence belongs to the universal ribosomal protein uS7 family. As to quaternary structure, part of the 30S ribosomal subunit. Contacts proteins S9 and S11.

Its function is as follows. One of the primary rRNA binding proteins, it binds directly to 16S rRNA where it nucleates assembly of the head domain of the 30S subunit. Is located at the subunit interface close to the decoding center, probably blocks exit of the E-site tRNA. The sequence is that of Small ribosomal subunit protein uS7 from Sorangium cellulosum (strain So ce56) (Polyangium cellulosum (strain So ce56)).